A 206-amino-acid polypeptide reads, in one-letter code: Large ribosomal subunit protein uL4 (206 aa).

The interval 43-78 is disordered; sequence ARSGNRKQKDREEVHHTTKKPWRQKGTGRARAGMSS. Basic and acidic residues predominate over residues 49–58; it reads KQKDREEVHH. Residues 59–70 show a composition bias toward basic residues; that stretch reads TTKKPWRQKGTG.

The protein belongs to the universal ribosomal protein uL4 family. Part of the 50S ribosomal subunit.

Its function is as follows. One of the primary rRNA binding proteins, this protein initially binds near the 5'-end of the 23S rRNA. It is important during the early stages of 50S assembly. It makes multiple contacts with different domains of the 23S rRNA in the assembled 50S subunit and ribosome. In terms of biological role, forms part of the polypeptide exit tunnel. The polypeptide is Large ribosomal subunit protein uL4 (Janthinobacterium sp. (strain Marseille) (Minibacterium massiliensis)).